The sequence spans 156 residues: Probable cyclic pyranopterin monophosphate synthase (156 aa).

Substrate is bound by residues 74–76 (MCH) and 110–111 (ME). The active site involves Asp-125.

The protein belongs to the MoaC family. Homohexamer; trimer of dimers.

It carries out the reaction (8S)-3',8-cyclo-7,8-dihydroguanosine 5'-triphosphate = cyclic pyranopterin phosphate + diphosphate. It functions in the pathway cofactor biosynthesis; molybdopterin biosynthesis. Catalyzes the conversion of (8S)-3',8-cyclo-7,8-dihydroguanosine 5'-triphosphate to cyclic pyranopterin monophosphate (cPMP). This Methanospirillum hungatei JF-1 (strain ATCC 27890 / DSM 864 / NBRC 100397 / JF-1) protein is Probable cyclic pyranopterin monophosphate synthase.